A 1158-amino-acid chain; its full sequence is ATP-dependent helicase/deoxyribonuclease subunit B (1158 aa).

8-15 contributes to the ATP binding site; that stretch reads GRAGTGKS. [4Fe-4S] cluster contacts are provided by Cys-791, Cys-1112, Cys-1115, and Cys-1121.

It belongs to the helicase family. AddB/RexB type 1 subfamily. As to quaternary structure, heterodimer of AddA and AddB. Mg(2+) serves as cofactor. The cofactor is [4Fe-4S] cluster.

The heterodimer acts as both an ATP-dependent DNA helicase and an ATP-dependent, dual-direction single-stranded exonuclease. Recognizes the chi site generating a DNA molecule suitable for the initiation of homologous recombination. The AddB subunit has 5' -&gt; 3' nuclease activity but not helicase activity. The polypeptide is ATP-dependent helicase/deoxyribonuclease subunit B (Clostridium perfringens (strain ATCC 13124 / DSM 756 / JCM 1290 / NCIMB 6125 / NCTC 8237 / Type A)).